Reading from the N-terminus, the 165-residue chain is HTH-type transcriptional regulator IscR (165 aa).

The region spanning 2–131 (RLTSKGRYAV…NNITLAELVN (130 aa)) is the HTH rrf2-type domain. The segment at residues 28 to 51 (LADISERQGISLSYLEQLFSRLRK) is a DNA-binding region (H-T-H motif). The [2Fe-2S] cluster site is built by Cys92, Cys98, and Cys104.

[2Fe-2S] cluster serves as cofactor.

Regulates the transcription of several operons and genes involved in the biogenesis of Fe-S clusters and Fe-S-containing proteins. This Erwinia tasmaniensis (strain DSM 17950 / CFBP 7177 / CIP 109463 / NCPPB 4357 / Et1/99) protein is HTH-type transcriptional regulator IscR.